Here is a 335-residue protein sequence, read N- to C-terminus: Vitamin B12 import system permease protein BtuC (335 aa).

9 helical membrane passes run 21 to 43 (FLAI…GENW), 63 to 82 (FPRV…AGAV), 95 to 114 (GLLG…VLMF), 119 to 141 (PFWL…LLTF), 153 to 175 (LLVG…YFST), 195 to 212 (WRHQ…IWLS), 244 to 266 (FAVG…IGLV), 281 to 303 (TLLP…LSRL), and 310 to 329 (VPIG…WLLL).

This sequence belongs to the binding-protein-dependent transport system permease family. FecCD subfamily. The complex is composed of two ATP-binding proteins (BtuD), two transmembrane proteins (BtuC) and a solute-binding protein (BtuF).

It localises to the cell inner membrane. Functionally, part of the ABC transporter complex BtuCDF involved in vitamin B12 import. Involved in the translocation of the substrate across the membrane. The polypeptide is Vitamin B12 import system permease protein BtuC (Photorhabdus laumondii subsp. laumondii (strain DSM 15139 / CIP 105565 / TT01) (Photorhabdus luminescens subsp. laumondii)).